The primary structure comprises 1122 residues: Transcription-repair-coupling factor (1122 aa).

In terms of domain architecture, Helicase ATP-binding spans 593–758 (DLRNGMLMDR…MTGLKELSII (166 aa)). 606-613 (GDVGFGKT) contacts ATP. The DEEQ box signature appears at 711-714 (DEEQ). Positions 779-933 (IIRDALLREH…GFTIASRDMD (155 aa)) constitute a Helicase C-terminal domain.

The protein in the N-terminal section; belongs to the UvrB family. This sequence in the C-terminal section; belongs to the helicase family. RecG subfamily.

It localises to the cytoplasm. Functionally, couples transcription and DNA repair by recognizing RNA polymerase (RNAP) stalled at DNA lesions. Mediates ATP-dependent release of RNAP and its truncated transcript from the DNA, and recruitment of nucleotide excision repair machinery to the damaged site. This Rickettsia conorii (strain ATCC VR-613 / Malish 7) protein is Transcription-repair-coupling factor.